The sequence spans 130 residues: Small ribosomal subunit protein uS11 (130 aa).

This sequence belongs to the universal ribosomal protein uS11 family. Part of the 30S ribosomal subunit. Interacts with proteins S7 and S18. Binds to IF-3.

Functionally, located on the platform of the 30S subunit, it bridges several disparate RNA helices of the 16S rRNA. Forms part of the Shine-Dalgarno cleft in the 70S ribosome. In Thermotoga maritima (strain ATCC 43589 / DSM 3109 / JCM 10099 / NBRC 100826 / MSB8), this protein is Small ribosomal subunit protein uS11.